We begin with the raw amino-acid sequence, 249 residues long: Domoic acid biosynthesis cluster protein B (249 aa).

Unknown function: part of the gene cluster that mediates the biosynthesis of domoic acid (DA) and derivatives, natural products with neurochemical activity acting as ionotropic glutamate receptor (iGluR) agonists, thus being neurotoxins causing amnesic shellfish poisoning (ASP). The chain is Domoic acid biosynthesis cluster protein B from Pseudo-nitzschia multiseries (Marine planktonic diatom).